A 620-amino-acid chain; its full sequence is Chaperone protein HscA homolog (620 aa).

This sequence belongs to the heat shock protein 70 family.

In terms of biological role, chaperone involved in the maturation of iron-sulfur cluster-containing proteins. Has a low intrinsic ATPase activity which is markedly stimulated by HscB. The chain is Chaperone protein HscA homolog from Pasteurella multocida (strain Pm70).